The following is a 377-amino-acid chain: Succinyl-diaminopimelate desuccinylase (377 aa).

Position 67 (H67) interacts with Zn(2+). The active site involves D69. Residue D100 coordinates Zn(2+). Catalysis depends on E134, which acts as the Proton acceptor. The Zn(2+) site is built by E135, E163, and H349.

Belongs to the peptidase M20A family. DapE subfamily. Homodimer. The cofactor is Zn(2+). Co(2+) is required as a cofactor.

The enzyme catalyses N-succinyl-(2S,6S)-2,6-diaminopimelate + H2O = (2S,6S)-2,6-diaminopimelate + succinate. Its pathway is amino-acid biosynthesis; L-lysine biosynthesis via DAP pathway; LL-2,6-diaminopimelate from (S)-tetrahydrodipicolinate (succinylase route): step 3/3. In terms of biological role, catalyzes the hydrolysis of N-succinyl-L,L-diaminopimelic acid (SDAP), forming succinate and LL-2,6-diaminopimelate (DAP), an intermediate involved in the bacterial biosynthesis of lysine and meso-diaminopimelic acid, an essential component of bacterial cell walls. The polypeptide is Succinyl-diaminopimelate desuccinylase (Haemophilus influenzae (strain PittEE)).